The chain runs to 693 residues: Probable L-type lectin-domain containing receptor kinase VI.1 (693 aa).

The N-terminal stretch at 1-22 (MGIARSINSFMFFFFLMILSNA) is a signal peptide. 7 N-linked (GlcNAc...) asparagine glycosylation sites follow: asparagine 21, asparagine 44, asparagine 71, asparagine 89, asparagine 141, asparagine 180, and asparagine 223. The Extracellular segment spans residues 23-311 (SKSSVLAEAT…SNKKGYNSQV (289 aa)). The tract at residues 33–279 (TAKFTFIGFK…AHYVMGWSFS (247 aa)) is legume-lectin like. The chain crosses the membrane as a helical span at residues 312–332 (IVLIVALSIVTLVLLVLLFIF). Residues 333–693 (VMYKRRIQEE…VSSSSIVSGR (361 aa)) lie on the Cytoplasmic side of the membrane. The Protein kinase domain occupies 368-642 (FKESEIIGTG…LRYLNGEENV (275 aa)). ATP is bound by residues 374–382 (IGTGGFGIV) and lysine 396. Aspartate 495 acts as the Proton acceptor in catalysis. The segment at 670-693 (DRASSSNTFSSFSNVSSSSIVSGR) is disordered.

It in the C-terminal section; belongs to the protein kinase superfamily. Ser/Thr protein kinase family. In the N-terminal section; belongs to the leguminous lectin family.

The protein localises to the cell membrane. It carries out the reaction L-seryl-[protein] + ATP = O-phospho-L-seryl-[protein] + ADP + H(+). The enzyme catalyses L-threonyl-[protein] + ATP = O-phospho-L-threonyl-[protein] + ADP + H(+). The chain is Probable L-type lectin-domain containing receptor kinase VI.1 (LECRK61) from Arabidopsis thaliana (Mouse-ear cress).